The sequence spans 235 residues: MTELARLKFYATQPHSCSYLPDEQATTLFLDPSQPMDVNVYADLSEMGFRRSGDHLYRPHCQNCNACVPARIPAARFIPNRQQRRILKRNADLTVTAARPAFKEEYFELYRRYIETRHADGDMYPPSRDQFSTFLVRDLPFCWFYEFRLEGHLMAVAVCDLLPNGLSAVYTFYEPDEERRSLGRFAILWQITEALRQDLEAVYLGYWIKNCKKMNYKTQYRPIELLINQRWVTLN.

This sequence belongs to the R-transferase family. Bpt subfamily.

It is found in the cytoplasm. The enzyme catalyses N-terminal L-glutamyl-[protein] + L-leucyl-tRNA(Leu) = N-terminal L-leucyl-L-glutamyl-[protein] + tRNA(Leu) + H(+). It catalyses the reaction N-terminal L-aspartyl-[protein] + L-leucyl-tRNA(Leu) = N-terminal L-leucyl-L-aspartyl-[protein] + tRNA(Leu) + H(+). Its function is as follows. Functions in the N-end rule pathway of protein degradation where it conjugates Leu from its aminoacyl-tRNA to the N-termini of proteins containing an N-terminal aspartate or glutamate. This is Aspartate/glutamate leucyltransferase from Pseudomonas putida (strain GB-1).